The sequence spans 433 residues: Protein RETICULATA-RELATED 1, chloroplastic (433 aa).

A chloroplast-targeting transit peptide spans 1-63; the sequence is MSISLKISHI…LSSRNLRNRC (63 aa). Valine 64 is modified (N-acetylvaline). Residues 93–105 are compositionally biased toward acidic residues; it reads DLEPELDDGDGGD. The tract at residues 93–143 is disordered; it reads DLEPELDDGDGGDENGNNDGGGNGGNGDGGGGGGDGEGDDGEDEADKAEEK. The span at 110–127 shows a compositional bias: gly residues; that stretch reads NDGGGNGGNGDGGGGGGD. The segment covering 128–139 has biased composition (acidic residues); sequence GEGDDGEDEADK. A run of 2 helical transmembrane segments spans residues 249-269 and 323-343; these read LYAA…GLLA and LLYG…ANLI.

The protein belongs to the RETICULATA family. Expressed in root vasculature, distal region of young leaf primordia, leaf bundle sheath cells, hydathodes and pollen grains.

The protein resides in the plastid. It is found in the chloroplast membrane. Its function is as follows. May play a role in leaf development. The chain is Protein RETICULATA-RELATED 1, chloroplastic from Arabidopsis thaliana (Mouse-ear cress).